We begin with the raw amino-acid sequence, 306 residues long: MNYGKEQVAVYRTYANPLEGVRTIPESSFDGRDNILFGLEVRVQFEGEEFLPSFSEADNTTVVATDSMKNFVLHQAGEYEGATAEGFLHFVGTEFLETYPHVEAVTMSATEYPFDERPVPGDDGFDPSDLVFRVSDDESAFGEIYLEREGDELRFEEQTSGVTEIELVKVKENSFTGYVQDEYTTLPEREDRALYISLDVFWTYSDPEDALGDEPQRYVPAEQVRDIAQVVFHEVNSNSIQDLIYQIGLRVLERYPQLESVNFEANNRTWIEVRDDLDGDAKVLREPPRPTGYQQFSMDRSDLEEQ.

Catalysis depends on charge relay system residues Lys-5 and Thr-65. Residues Thr-65, Asp-66, Phe-175, Arg-192, Ile-240, Gln-241, and Asn-267 each coordinate urate. Residues 281–306 are disordered; it reads AKVLREPPRPTGYQQFSMDRSDLEEQ.

It belongs to the uricase family.

It catalyses the reaction urate + O2 + H2O = 5-hydroxyisourate + H2O2. It functions in the pathway purine metabolism; urate degradation; (S)-allantoin from urate: step 1/3. In terms of biological role, catalyzes the oxidation of uric acid to 5-hydroxyisourate, which is further processed to form (S)-allantoin. The sequence is that of Uricase from Halalkalicoccus jeotgali (strain DSM 18796 / CECT 7217 / JCM 14584 / KCTC 4019 / B3).